We begin with the raw amino-acid sequence, 354 residues long: Chorismate synthase (354 aa).

Arg-48 serves as a coordination point for NADP(+). FMN-binding positions include 125–127 (RAS), Ala-280, 295–299 (KPIPS), and Arg-321.

The protein belongs to the chorismate synthase family. Homotetramer. The cofactor is FMNH2.

The enzyme catalyses 5-O-(1-carboxyvinyl)-3-phosphoshikimate = chorismate + phosphate. It functions in the pathway metabolic intermediate biosynthesis; chorismate biosynthesis; chorismate from D-erythrose 4-phosphate and phosphoenolpyruvate: step 7/7. Its function is as follows. Catalyzes the anti-1,4-elimination of the C-3 phosphate and the C-6 proR hydrogen from 5-enolpyruvylshikimate-3-phosphate (EPSP) to yield chorismate, which is the branch point compound that serves as the starting substrate for the three terminal pathways of aromatic amino acid biosynthesis. This reaction introduces a second double bond into the aromatic ring system. The protein is Chorismate synthase of Syntrophus aciditrophicus (strain SB).